The sequence spans 86 residues: Triosephosphate isomerase (86 aa).

The Proton acceptor role is filled by Glu-62.

The protein belongs to the triosephosphate isomerase family. As to quaternary structure, homodimer.

It carries out the reaction D-glyceraldehyde 3-phosphate = dihydroxyacetone phosphate. Its pathway is carbohydrate biosynthesis; gluconeogenesis. It functions in the pathway carbohydrate degradation; glycolysis; D-glyceraldehyde 3-phosphate from glycerone phosphate: step 1/1. The sequence is that of Triosephosphate isomerase from Platanus orientalis (Oriental plane-tree).